The chain runs to 332 residues: Biotin synthase (332 aa).

The Radical SAM core domain occupies 51-279 (YKVQLASLLS…LSRVRLSAGR (229 aa)). Residues cysteine 66, cysteine 70, and cysteine 73 each contribute to the [4Fe-4S] cluster site. [2Fe-2S] cluster contacts are provided by cysteine 110, cysteine 142, cysteine 202, and arginine 274.

This sequence belongs to the radical SAM superfamily. Biotin synthase family. Homodimer. The cofactor is [4Fe-4S] cluster. Requires [2Fe-2S] cluster as cofactor.

The enzyme catalyses (4R,5S)-dethiobiotin + (sulfur carrier)-SH + 2 reduced [2Fe-2S]-[ferredoxin] + 2 S-adenosyl-L-methionine = (sulfur carrier)-H + biotin + 2 5'-deoxyadenosine + 2 L-methionine + 2 oxidized [2Fe-2S]-[ferredoxin]. It functions in the pathway cofactor biosynthesis; biotin biosynthesis; biotin from 7,8-diaminononanoate: step 2/2. In terms of biological role, catalyzes the conversion of dethiobiotin (DTB) to biotin by the insertion of a sulfur atom into dethiobiotin via a radical-based mechanism. This Prochlorococcus marinus (strain MIT 9211) protein is Biotin synthase.